Consider the following 353-residue polypeptide: Thiamine-phosphate synthase (353 aa).

The tract at residues 1 to 128 (MESMPVAPST…ARTAAAVRYA (128 aa)) is unknown. The thiamine-phosphate synthase stretch occupies residues 129–353 (LYDHEVRILE…ASRQLLDLLT (225 aa)). Residues 185–189 (QYRRK) and asparagine 217 contribute to the 4-amino-2-methyl-5-(diphosphooxymethyl)pyrimidine site. Residues aspartate 218 and aspartate 237 each contribute to the Mg(2+) site. Serine 256 serves as a coordination point for 4-amino-2-methyl-5-(diphosphooxymethyl)pyrimidine. 2-[(2R,5Z)-2-carboxy-4-methylthiazol-5(2H)-ylidene]ethyl phosphate is bound at residue 282–284 (TAT). Lysine 285 is a binding site for 4-amino-2-methyl-5-(diphosphooxymethyl)pyrimidine. Residues glycine 312 and 332–333 (VS) each bind 2-[(2R,5Z)-2-carboxy-4-methylthiazol-5(2H)-ylidene]ethyl phosphate.

This sequence belongs to the thiamine-phosphate synthase family. Mg(2+) is required as a cofactor.

The enzyme catalyses 2-[(2R,5Z)-2-carboxy-4-methylthiazol-5(2H)-ylidene]ethyl phosphate + 4-amino-2-methyl-5-(diphosphooxymethyl)pyrimidine + 2 H(+) = thiamine phosphate + CO2 + diphosphate. The catalysed reaction is 2-(2-carboxy-4-methylthiazol-5-yl)ethyl phosphate + 4-amino-2-methyl-5-(diphosphooxymethyl)pyrimidine + 2 H(+) = thiamine phosphate + CO2 + diphosphate. It catalyses the reaction 4-methyl-5-(2-phosphooxyethyl)-thiazole + 4-amino-2-methyl-5-(diphosphooxymethyl)pyrimidine + H(+) = thiamine phosphate + diphosphate. It participates in cofactor biosynthesis; thiamine diphosphate biosynthesis; thiamine phosphate from 4-amino-2-methyl-5-diphosphomethylpyrimidine and 4-methyl-5-(2-phosphoethyl)-thiazole: step 1/1. Condenses 4-methyl-5-(beta-hydroxyethyl)thiazole monophosphate (THZ-P) and 2-methyl-4-amino-5-hydroxymethyl pyrimidine pyrophosphate (HMP-PP) to form thiamine monophosphate (TMP). In Synechococcus sp. (strain WH7803), this protein is Thiamine-phosphate synthase.